Reading from the N-terminus, the 430-residue chain is ATP-dependent protease ATPase subunit HslU (430 aa).

Residues valine 18, 60 to 65 (GVGKTE), aspartate 243, glutamate 308, and arginine 380 each bind ATP.

This sequence belongs to the ClpX chaperone family. HslU subfamily. In terms of assembly, a double ring-shaped homohexamer of HslV is capped on each side by a ring-shaped HslU homohexamer. The assembly of the HslU/HslV complex is dependent on binding of ATP.

It localises to the cytoplasm. ATPase subunit of a proteasome-like degradation complex; this subunit has chaperone activity. The binding of ATP and its subsequent hydrolysis by HslU are essential for unfolding of protein substrates subsequently hydrolyzed by HslV. HslU recognizes the N-terminal part of its protein substrates and unfolds these before they are guided to HslV for hydrolysis. The chain is ATP-dependent protease ATPase subunit HslU from Caulobacter vibrioides (strain ATCC 19089 / CIP 103742 / CB 15) (Caulobacter crescentus).